The chain runs to 218 residues: N-(5'-phosphoribosyl)anthranilate isomerase (218 aa).

It belongs to the TrpF family.

The catalysed reaction is N-(5-phospho-beta-D-ribosyl)anthranilate = 1-(2-carboxyphenylamino)-1-deoxy-D-ribulose 5-phosphate. Its pathway is amino-acid biosynthesis; L-tryptophan biosynthesis; L-tryptophan from chorismate: step 3/5. The sequence is that of N-(5'-phosphoribosyl)anthranilate isomerase from Lachnoclostridium phytofermentans (strain ATCC 700394 / DSM 18823 / ISDg) (Clostridium phytofermentans).